Consider the following 89-residue polypeptide: Small ribosomal subunit protein uS15 (89 aa).

The tract at residues 1 to 25 (MSLSAEQKGEIVKKHARTASDTGSP) is disordered.

Belongs to the universal ribosomal protein uS15 family. As to quaternary structure, part of the 30S ribosomal subunit. Forms a bridge to the 50S subunit in the 70S ribosome, contacting the 23S rRNA.

In terms of biological role, one of the primary rRNA binding proteins, it binds directly to 16S rRNA where it helps nucleate assembly of the platform of the 30S subunit by binding and bridging several RNA helices of the 16S rRNA. Its function is as follows. Forms an intersubunit bridge (bridge B4) with the 23S rRNA of the 50S subunit in the ribosome. The protein is Small ribosomal subunit protein uS15 of Alkalilimnicola ehrlichii (strain ATCC BAA-1101 / DSM 17681 / MLHE-1).